Consider the following 619-residue polypeptide: Chaperone protein HscA homolog (619 aa).

It belongs to the heat shock protein 70 family.

Functionally, chaperone involved in the maturation of iron-sulfur cluster-containing proteins. Has a low intrinsic ATPase activity which is markedly stimulated by HscB. The chain is Chaperone protein HscA homolog from Haemophilus influenzae (strain PittEE).